The chain runs to 206 residues: Small ribosomal subunit protein uS4 (206 aa).

Positions 96 to 156 (CRLDNVVYRM…EKSLGQLRIV (61 aa)) constitute an S4 RNA-binding domain.

Belongs to the universal ribosomal protein uS4 family. In terms of assembly, part of the 30S ribosomal subunit. Contacts protein S5. The interaction surface between S4 and S5 is involved in control of translational fidelity.

One of the primary rRNA binding proteins, it binds directly to 16S rRNA where it nucleates assembly of the body of the 30S subunit. In terms of biological role, with S5 and S12 plays an important role in translational accuracy. In Pseudomonas putida (strain ATCC 47054 / DSM 6125 / CFBP 8728 / NCIMB 11950 / KT2440), this protein is Small ribosomal subunit protein uS4.